Reading from the N-terminus, the 158-residue chain is Urease accessory protein UreE (158 aa).

Belongs to the UreE family.

It is found in the cytoplasm. Involved in urease metallocenter assembly. Binds nickel. Probably functions as a nickel donor during metallocenter assembly. The protein is Urease accessory protein UreE of Klebsiella pneumoniae subsp. pneumoniae (strain ATCC 700721 / MGH 78578).